Reading from the N-terminus, the 503-residue chain is Lysine--tRNA ligase (503 aa).

Mg(2+) contacts are provided by glutamate 414 and glutamate 421.

Belongs to the class-II aminoacyl-tRNA synthetase family. Homodimer. It depends on Mg(2+) as a cofactor.

It is found in the cytoplasm. The enzyme catalyses tRNA(Lys) + L-lysine + ATP = L-lysyl-tRNA(Lys) + AMP + diphosphate. The sequence is that of Lysine--tRNA ligase from Neisseria meningitidis serogroup B (strain ATCC BAA-335 / MC58).